A 338-amino-acid polypeptide reads, in one-letter code: General transcription and DNA repair factor IIH subunit TFB4 (338 aa).

Position 1 is an N-acetylmethionine (methionine 1). A C4-type zinc finger spans residues 289–308 (CSVCLCVLSIIPPGNKCPAC).

The protein belongs to the TFB4 family. As to quaternary structure, component of the 7-subunit TFIIH core complex composed of XPB/SSL2, XPD/RAD3, SSL1, TFB1, TFB2, TFB4 and TFB5, which is active in NER. The core complex associates with the 3-subunit CTD-kinase module TFIIK composed of CCL1, KIN28 and TFB3 to form the 10-subunit holoenzyme (holo-TFIIH) active in transcription. An additionnal subunit, TFB6, plays a role in the dissociation of the SSL2 helicase from TFIIH after transcription initiation.

Its subcellular location is the nucleus. In terms of biological role, component of the general transcription and DNA repair factor IIH (TFIIH) core complex, which is involved in general and transcription-coupled nucleotide excision repair (NER) of damaged DNA and, when complexed to TFIIK, in RNA transcription by RNA polymerase II. In NER, TFIIH acts by opening DNA around the lesion to allow the excision of the damaged oligonucleotide and its replacement by a new DNA fragment. In transcription, TFIIH has an essential role in transcription initiation. When the pre-initiation complex (PIC) has been established, TFIIH is required for promoter opening and promoter escape. Phosphorylation of the C-terminal tail (CTD) of the largest subunit of RNA polymerase II by the kinase module TFIIK controls the initiation of transcription. The polypeptide is General transcription and DNA repair factor IIH subunit TFB4 (TFB4) (Saccharomyces cerevisiae (strain ATCC 204508 / S288c) (Baker's yeast)).